Reading from the N-terminus, the 491-residue chain is MEEVQRRQHPHPRRSLKKLSEDSLTKQPEEVFDVLEKLGEGSYGSVFKAIHKESGQVVAIKQVPVESDLQEIIKEISIMQQCDSPHVVKYYGSYFKNTDLWIVMEYCGAGSVSDLIRIRNKTLTEDEIATILQSTLKGLEYLHFMRKIHRDIKAGNILLNNEGHAKLADFGVAGQLTDTMAKRNTVIGTPFWMAPEVIQEIGYNCVADIWSLGISAIEMAEGKPPYADIHPMRAIFMIPTNPPPTFRKPELWTDEFTDFVKQCLVKNPEQRAAATQLLQHPFIKNAKPVSILRDLITDMMEIKLKRQEEQQRDLDQDDEENSEEDDMDSGTMVRASAEDTGTMRAASTLSDGARTMIEHDSSTLDSQMGTMVINSGEDEEDGTMKRKEETIQQSKPSFLEYFEQKEKENQANSHSNRNAQALQNSSDNWKVPQDGDFESLKSWSVEELQRRLASLDPTMEQEIEEIRQRYQAKRQPILDAIDAKKRWQQNF.

Residues 1-24 (MEEVQRRQHPHPRRSLKKLSEDSL) are disordered. Over residues 7–17 (RQHPHPRRSLK) the composition is skewed to basic residues. The Protein kinase domain occupies 32-283 (FDVLEKLGEG…ATQLLQHPFI (252 aa)). ATP contacts are provided by residues 38–46 (LGEGSYGSV) and Lys61. Asp151 (proton acceptor) is an active-site residue. Thr185 carries the post-translational modification Phosphothreonine; by autocatalysis. Residues 292-334 (LRDLITDMMEIKLKRQEEQQRDLDQDDEENSEEDDMDSGTMVR) are a coiled coil. 2 disordered regions span residues 307-394 (QEEQ…IQQS) and 406-435 (EKEN…PQDG). Positions 315–328 (DQDDEENSEEDDMD) are enriched in acidic residues. Composition is skewed to polar residues over residues 363–373 (TLDSQMGTMVI) and 410–428 (QANS…SSDN). One can recognise an SARAH domain in the interval 437–484 (FESLKSWSVEELQRRLASLDPTMEQEIEEIRQRYQAKRQPILDAIDAK). Residues 442–475 (SWSVEELQRRLASLDPTMEQEIEEIRQRYQAKRQ) adopt a coiled-coil conformation.

Belongs to the protein kinase superfamily. STE Ser/Thr protein kinase family. STE20 subfamily. In terms of assembly, homodimer; mediated via the coiled-coil region. Requires Mg(2+) as cofactor. In terms of processing, proteolytically cleaved by caspase-3 during apoptosis at Asp-328 resulting in a 37 kDa form. Proteolytic cleavage results in kinase activation and nuclear translocation of the truncated form (MST1/N).

The protein resides in the cytoplasm. The protein localises to the nucleus. It catalyses the reaction L-seryl-[protein] + ATP = O-phospho-L-seryl-[protein] + ADP + H(+). The enzyme catalyses L-threonyl-[protein] + ATP = O-phospho-L-threonyl-[protein] + ADP + H(+). Its activity is regulated as follows. Inhibited by the C-terminal non-catalytic region. Activated by caspase-cleavage. Full activation also requires homodimerization and autophosphorylation of Thr-185. Its function is as follows. Stress-activated, pro-apoptotic kinase which, following caspase-cleavage, enters the nucleus and induces chromatin condensation followed by internucleosomal DNA fragmentation. Key component of the Hippo signaling pathway which plays a pivotal role in organ size control and tumor suppression by restricting proliferation and promoting apoptosis. The core of this pathway is composed of a kinase cascade wherein stk3/mst2 and stk4/mst1, in complex with its regulatory protein sav1, phosphorylates and activates lats1/2 in complex with its regulatory protein mob1, which in turn phosphorylates and inactivates yap1 oncoprotein and wwtr1/taz. Phosphorylation of yap1 by lats2 inhibits its translocation into the nucleus to regulate cellular genes important for cell proliferation, cell death, and cell migration. Phosphorylates 'Ser-14' of histone H2B (H2BS14ph) during apoptosis. The polypeptide is Serine/threonine-protein kinase 3/4 (STK4) (Squalus acanthias (Spiny dogfish)).